The following is a 609-amino-acid chain: MALPQLSEGAISAMLGGDSSCKPTLQVINIRPINTGNGPPRYRLLMSDGLNTLSSFMLATQLNSLVDNNLLATNCICQVSRFIVNNLKDGRRVIIVMELDVLKSADLVMGKIGNPQPYNDGQPQPAAPAPASAPAPAPSKLQNNSAPPPSMNRGTSKLFGGGSLLNTPGGSQSKVVPIASLNPYQSKWTVRARVTNKGQIRTWSNSRGEGKLFSIEMVDESGEIRATAFNEQADKFFSIIEVNKVYYFSKGTLKIANKQYTSVKNDYEMTFNSETSVIPCDDSADVPMVQFEFVSIGELESKNKDTVLDIIGVCKNVEEVTKVTIKSNNREVSKRSIHLMDSSGKVVSTTLWGEDADKFDGSRQPVVAIKGARLSDFGGRSLSVLSSSTVMINPDIPEAFKLRAWFDSEGQVVEGTSISESRGGGTGGGNTNWKSLLEVKNENLGHGEKADYFTSVATIVYLRKENCLYQACPSQDCNKKVIDQQNGLFRCEKCNKEFPNFKYRLILSANIADFGENQWITCFQESAESILGQNATYLGELKEKNEQAYDEVFQNANFRSYTFRARVKLETYNDESRIKATAVDVKPVDHKEYSRRLIMNIRKMATQGV.

The tract at residues 113-163 (GNPQPYNDGQPQPAAPAPASAPAPAPSKLQNNSAPPPSMNRGTSKLFGGGS) is disordered. Pro residues predominate over residues 125–137 (PAAPAPASAPAPA). The OB DNA-binding region spans 188 to 272 (WTVRARVTNK…VKNDYEMTFN (85 aa)). Residues 472–494 (CPSQDCNKKVIDQQNGLFRCEKC) form a C4-type zinc finger.

It belongs to the replication factor A protein 1 family. As to quaternary structure, component of the heterotrimeric canonical replication protein A complex (RPA). Interacts with rpain-a.

The protein localises to the nucleus. The protein resides in the PML body. Its function is as follows. As part of the heterotrimeric replication protein A complex (RPA/RP-A), binds and stabilizes single-stranded DNA intermediates, that form during DNA replication or upon DNA stress. It prevents their reannealing and in parallel, recruits and activates different proteins and complexes involved in DNA metabolism. Thereby, it plays an essential role both in DNA replication and the cellular response to DNA damage. This Xenopus laevis (African clawed frog) protein is Replication protein A 70 kDa DNA-binding subunit (rpa1).